Reading from the N-terminus, the 190-residue chain is MAPKKDAKKPEPPKKAEPAPAPAPAPEPPKADAVDLSGVKLDFTQDQMEDYREAFLLFDRVGDSKVAYNQIADIMRALGQNPTNKEVTKILGNPTADDMVNKRVDFEGFLPMLQVVINNPNKATYDDYVEGLRVFDKEGNGTVMGAELRIVLSTLGEKMSEAEIDALMQGQEDENGCVNYEAFVKHIMSV.

Residues 1-17 (MAPKKDAKKPEPPKKAE) show a composition bias toward basic and acidic residues. The segment at 1–33 (MAPKKDAKKPEPPKKAEPAPAPAPAPEPPKADA) is disordered. Residues 19-28 (APAPAPAPEP) show a composition bias toward pro residues. EF-hand domains lie at 46–81 (DQME…LGQN) and 123–158 (ATYD…LGEK).

Myosin is a hexamer of 2 heavy chains and 4 light chains. Does not bind calcium. In terms of tissue distribution, expressed in fast muscle fibers during skeletal muscle differentiation.

Non-regulatory myosin light chain required for proper formation and/or maintenance of myofibers, and thus appropriate muscle function. This is Myosin, light chain 1, alkali; skeletal, fast from Danio rerio (Zebrafish).